Here is a 100-residue protein sequence, read N- to C-terminus: uncharacterized protein (100 aa).

It localises to the mitochondrion. This is an uncharacterized protein from Arabidopsis thaliana (Mouse-ear cress).